Reading from the N-terminus, the 144-residue chain is Histone H2A.Z-specific chaperone CHZ1 (144 aa).

Positions 1-26 (MAEELKEKRELEVEEDNTKKDNSDKK) are enriched in basic and acidic residues. Disordered regions lie at residues 1–85 (MAEE…EQED) and 117–144 (AAEG…EFDE). Residues 125 to 144 (DEDEDEDDEDAKEDDGEFDE) show a composition bias toward acidic residues.

The protein belongs to the CHZ1 family. As to quaternary structure, forms a heterotrimer with H2A.Z-H2B, stabilizing the association of the histone dimer. Also, with a lower affinity, forms a heterotrimer with H2A-H2B.

The protein localises to the nucleus. In terms of biological role, forms a chaperone-bound H2A.Z-H2B complex that acts as a source for SWR1 complex-dependent H2A to H2A.Z histone replacement in chromatin. This is Histone H2A.Z-specific chaperone CHZ1 (CHZ1) from Vanderwaltozyma polyspora (strain ATCC 22028 / DSM 70294 / BCRC 21397 / CBS 2163 / NBRC 10782 / NRRL Y-8283 / UCD 57-17) (Kluyveromyces polysporus).